The primary structure comprises 270 residues: Small ribosomal subunit protein eS1 (270 aa).

2 disordered regions span residues 1 to 21 (MAVG…KKKV) and 238 to 270 (GGGK…QESV).

It belongs to the eukaryotic ribosomal protein eS1 family. In terms of assembly, component of the small ribosomal subunit. Mature ribosomes consist of a small (40S) and a large (60S) subunit. The 40S subunit contains about 33 different proteins and 1 molecule of RNA (18S). The 60S subunit contains about 49 different proteins and 3 molecules of RNA (28S, 5.8S and 5S).

It localises to the cytoplasm. The chain is Small ribosomal subunit protein eS1 from Aedes aegypti (Yellowfever mosquito).